The sequence spans 157 residues: Cyclic pyranopterin monophosphate synthase (157 aa).

Residues 74-76 (MCH) and 112-113 (ME) each bind substrate. Asp-127 is a catalytic residue.

The protein belongs to the MoaC family. As to quaternary structure, homohexamer; trimer of dimers.

It carries out the reaction (8S)-3',8-cyclo-7,8-dihydroguanosine 5'-triphosphate = cyclic pyranopterin phosphate + diphosphate. The protein operates within cofactor biosynthesis; molybdopterin biosynthesis. Functionally, catalyzes the conversion of (8S)-3',8-cyclo-7,8-dihydroguanosine 5'-triphosphate to cyclic pyranopterin monophosphate (cPMP). This Sulfurovum sp. (strain NBC37-1) protein is Cyclic pyranopterin monophosphate synthase.